The sequence spans 152 residues: MSEKYVVTWDMLQIHARKLAARLLPAEQWKGIIAVSRGGLVPAALLARELCIRHVDTVCISSYDHDNQREMSVLKRAEGDGEGFIVIDDLVDTGGTAQAIRDMYPKAHFVTIFAKPAGRPLVDDYIIDIPQNTWIEQPWDMGIAYIPPLVKS.

5-phospho-alpha-D-ribose 1-diphosphate-binding positions include 37–38 (RG), arginine 69, and 88–96 (DDLVDTGGT). GMP is bound at residue arginine 69. A Mg(2+)-binding site is contributed by aspartate 89. Positions 92 and 135 each coordinate guanine. The xanthine site is built by aspartate 92 and isoleucine 135. GMP is bound by residues 92 to 96 (DTGGT) and 134 to 135 (WI).

The protein belongs to the purine/pyrimidine phosphoribosyltransferase family. XGPT subfamily. Homotetramer. Mg(2+) is required as a cofactor.

Its subcellular location is the cell inner membrane. It carries out the reaction GMP + diphosphate = guanine + 5-phospho-alpha-D-ribose 1-diphosphate. The enzyme catalyses XMP + diphosphate = xanthine + 5-phospho-alpha-D-ribose 1-diphosphate. It catalyses the reaction IMP + diphosphate = hypoxanthine + 5-phospho-alpha-D-ribose 1-diphosphate. The protein operates within purine metabolism; GMP biosynthesis via salvage pathway; GMP from guanine: step 1/1. Its pathway is purine metabolism; XMP biosynthesis via salvage pathway; XMP from xanthine: step 1/1. Its function is as follows. Purine salvage pathway enzyme that catalyzes the transfer of the ribosyl-5-phosphate group from 5-phospho-alpha-D-ribose 1-diphosphate (PRPP) to the N9 position of the 6-oxopurines guanine and xanthine to form the corresponding ribonucleotides GMP (guanosine 5'-monophosphate) and XMP (xanthosine 5'-monophosphate), with the release of PPi. To a lesser extent, also acts on hypoxanthine. The sequence is that of Xanthine-guanine phosphoribosyltransferase from Erwinia tasmaniensis (strain DSM 17950 / CFBP 7177 / CIP 109463 / NCPPB 4357 / Et1/99).